The following is a 240-amino-acid chain: ATP-dependent dethiobiotin synthetase BioD (240 aa).

12–17 (EIGKTV) lines the ATP pocket. T16 contacts Mg(2+). Residue K37 is part of the active site. A substrate-binding site is contributed by S41. ATP is bound by residues D54, 115–118 (EGSG), 179–180 (NQ), and 207–209 (PYI). Mg(2+) contacts are provided by D54 and E115.

The protein belongs to the dethiobiotin synthetase family. In terms of assembly, homodimer. Mg(2+) serves as cofactor.

Its subcellular location is the cytoplasm. The enzyme catalyses (7R,8S)-7,8-diammoniononanoate + CO2 + ATP = (4R,5S)-dethiobiotin + ADP + phosphate + 3 H(+). The protein operates within cofactor biosynthesis; biotin biosynthesis; biotin from 7,8-diaminononanoate: step 1/2. Functionally, catalyzes a mechanistically unusual reaction, the ATP-dependent insertion of CO2 between the N7 and N8 nitrogen atoms of 7,8-diaminopelargonic acid (DAPA, also called 7,8-diammoniononanoate) to form a ureido ring. This Clostridium acetobutylicum (strain ATCC 824 / DSM 792 / JCM 1419 / IAM 19013 / LMG 5710 / NBRC 13948 / NRRL B-527 / VKM B-1787 / 2291 / W) protein is ATP-dependent dethiobiotin synthetase BioD.